A 542-amino-acid polypeptide reads, in one-letter code: Zinc finger protein 280A (542 aa).

The interval valine 66 to aspartate 185 is disordered. Residues glutamate 107–glutamate 122 are compositionally biased toward polar residues. The segment covering serine 128–proline 143 has biased composition (low complexity). The segment covering serine 161–aspartate 185 has biased composition (basic and acidic residues). 4 C2H2-type zinc fingers span residues threonine 334–histidine 357, alanine 364–histidine 387, leucine 423–histidine 445, and leucine 451–histidine 474. Residues glutamine 499–valine 520 show a composition bias toward polar residues. Residues glutamine 499 to serine 542 form a disordered region.

It is found in the nucleus. Functionally, may function as a transcription factor. The sequence is that of Zinc finger protein 280A (ZNF280A) from Homo sapiens (Human).